The chain runs to 296 residues: Phosphatidylglycerol--prolipoprotein diacylglyceryl transferase (296 aa).

The next 4 helical transmembrane spans lie at 10-30 (IAFSLGPVQVHWYGLMYLAAF), 57-77 (LLFYGMLGVVLGGRIGYMLFY), 92-112 (VWEGGMSFHGGLLGVLIACGL), and 119-139 (LHFFDVMDFVAPLVPLGLGFG). Arginine 140 serves as a coordination point for a 1,2-diacyl-sn-glycero-3-phospho-(1'-sn-glycerol). Transmembrane regions (helical) follow at residues 194-214 (QLYEAALEGVVMFVVLWTFSM), 220-240 (YAVSGLFALLYGVFRFIVEFV), and 255-275 (LTMGQILSLPLIGVGLVLLAL).

Belongs to the Lgt family.

It localises to the cell inner membrane. It carries out the reaction L-cysteinyl-[prolipoprotein] + a 1,2-diacyl-sn-glycero-3-phospho-(1'-sn-glycerol) = an S-1,2-diacyl-sn-glyceryl-L-cysteinyl-[prolipoprotein] + sn-glycerol 1-phosphate + H(+). It functions in the pathway protein modification; lipoprotein biosynthesis (diacylglyceryl transfer). Functionally, catalyzes the transfer of the diacylglyceryl group from phosphatidylglycerol to the sulfhydryl group of the N-terminal cysteine of a prolipoprotein, the first step in the formation of mature lipoproteins. The sequence is that of Phosphatidylglycerol--prolipoprotein diacylglyceryl transferase from Xanthomonas campestris pv. campestris (strain 8004).